We begin with the raw amino-acid sequence, 282 residues long: 4-diphosphocytidyl-2-C-methyl-D-erythritol kinase (282 aa).

Lys9 is an active-site residue. ATP is bound at residue Pro98 to Ser108. Asp140 is a catalytic residue.

The protein belongs to the GHMP kinase family. IspE subfamily. Homodimer.

The enzyme catalyses 4-CDP-2-C-methyl-D-erythritol + ATP = 4-CDP-2-C-methyl-D-erythritol 2-phosphate + ADP + H(+). The protein operates within isoprenoid biosynthesis; isopentenyl diphosphate biosynthesis via DXP pathway; isopentenyl diphosphate from 1-deoxy-D-xylulose 5-phosphate: step 3/6. Its function is as follows. Catalyzes the phosphorylation of the position 2 hydroxy group of 4-diphosphocytidyl-2C-methyl-D-erythritol. This is 4-diphosphocytidyl-2-C-methyl-D-erythritol kinase from Salmonella heidelberg (strain SL476).